A 350-amino-acid chain; its full sequence is Protein-glutamate methylesterase/protein-glutamine glutaminase 1 (350 aa).

The Response regulatory domain maps to Lys3 to Leu121. Position 54 is a 4-aspartylphosphate (Asp54). The CheB-type methylesterase domain maps to Pro148–Val342. Catalysis depends on residues Ser170, His197, and Asp290.

It belongs to the CheB family. Post-translationally, phosphorylated by CheA. Phosphorylation of the N-terminal regulatory domain activates the methylesterase activity.

It localises to the cytoplasm. The catalysed reaction is [protein]-L-glutamate 5-O-methyl ester + H2O = L-glutamyl-[protein] + methanol + H(+). It carries out the reaction L-glutaminyl-[protein] + H2O = L-glutamyl-[protein] + NH4(+). Involved in chemotaxis. Part of a chemotaxis signal transduction system that modulates chemotaxis in response to various stimuli. Catalyzes the demethylation of specific methylglutamate residues introduced into the chemoreceptors (methyl-accepting chemotaxis proteins or MCP) by CheR. Also mediates the irreversible deamidation of specific glutamine residues to glutamic acid. The sequence is that of Protein-glutamate methylesterase/protein-glutamine glutaminase 1 from Syntrophus aciditrophicus (strain SB).